The chain runs to 140 residues: MTSISSEYKLPEKTNTVSTNNSSLGKDEFLKILMTQVQNQDPLNPIDDKEFISQMATFSSLEQMMNLNTTMTQFVENQDPFTTYVDWMGKEVSWTDGKSATDKTGTVSSVKHFKGNYYLVLDDGTEISPANVMSVGQSSK.

The tract at residues 1–21 is disordered; that stretch reads MTSISSEYKLPEKTNTVSTNN.

It belongs to the FlgD family.

This is FlaA locus uncharacterized protein YlxG (ylxG) from Bacillus subtilis (strain 168).